The chain runs to 351 residues: Phospho-N-acetylmuramoyl-pentapeptide-transferase (351 aa).

10 helical membrane-spanning segments follow: residues 17-37 (TAYA…FIIL), 63-83 (IPTM…FFWI), 85-105 (FWNI…CLGF), 124-144 (FKIY…YYFG), 158-178 (SLKL…LISA), 190-210 (GLAI…AYLA), 230-250 (LVVF…FNAY), 254-274 (IMMG…TALI), 279-299 (ILFA…IIQV), and 328-348 (QVVI…LSTL).

The protein belongs to the glycosyltransferase 4 family. MraY subfamily. Mg(2+) serves as cofactor.

It is found in the cell inner membrane. It catalyses the reaction UDP-N-acetyl-alpha-D-muramoyl-L-alanyl-gamma-D-glutamyl-meso-2,6-diaminopimeloyl-D-alanyl-D-alanine + di-trans,octa-cis-undecaprenyl phosphate = di-trans,octa-cis-undecaprenyl diphospho-N-acetyl-alpha-D-muramoyl-L-alanyl-D-glutamyl-meso-2,6-diaminopimeloyl-D-alanyl-D-alanine + UMP. It participates in cell wall biogenesis; peptidoglycan biosynthesis. In terms of biological role, catalyzes the initial step of the lipid cycle reactions in the biosynthesis of the cell wall peptidoglycan: transfers peptidoglycan precursor phospho-MurNAc-pentapeptide from UDP-MurNAc-pentapeptide onto the lipid carrier undecaprenyl phosphate, yielding undecaprenyl-pyrophosphoryl-MurNAc-pentapeptide, known as lipid I. This chain is Phospho-N-acetylmuramoyl-pentapeptide-transferase, found in Borrelia turicatae (strain 91E135).